A 142-amino-acid chain; its full sequence is MAREYARTDRVGQQIQKEIATILMREIKDPRLSMTTVSAVEVTRDLAYAKIFVTFFNDNQDEIKASLEVLAEAEGYIRSLLGKRLRARIMPHLRFVYDSSMSEGVRMSALVDQAVASDKNGDAEVDDTQVDDEPSVDSEKGE.

The disordered stretch occupies residues 118-142 (DKNGDAEVDDTQVDDEPSVDSEKGE). A compositionally biased stretch (acidic residues) spans 123–136 (AEVDDTQVDDEPSV).

It belongs to the RbfA family. In terms of assembly, monomer. Binds 30S ribosomal subunits, but not 50S ribosomal subunits or 70S ribosomes.

Its subcellular location is the cytoplasm. Its function is as follows. One of several proteins that assist in the late maturation steps of the functional core of the 30S ribosomal subunit. Associates with free 30S ribosomal subunits (but not with 30S subunits that are part of 70S ribosomes or polysomes). Required for efficient processing of 16S rRNA. May interact with the 5'-terminal helix region of 16S rRNA. This is Ribosome-binding factor A from Colwellia psychrerythraea (strain 34H / ATCC BAA-681) (Vibrio psychroerythus).